Reading from the N-terminus, the 688-residue chain is Potassium-transporting ATPase ATP-binding subunit (688 aa).

Helical transmembrane passes span 37 to 57, 65 to 85, 219 to 239, and 262 to 282; these read FIVYIASILTTVLYVFSLFGI, ILFISILLWFTVLFANFAEAI, IALQILLVSLTIIFLVVTASL, and LALLVCLAPTTIGALLSAIGI. The active-site 4-aspartylphosphate intermediate is the D313. ATP-binding positions include D350, E354, 383–390, and K401; that span reads FTAKTRMS. The Mg(2+) site is built by D524 and D528. 3 helical membrane-spanning segments follow: residues 586–606, 622–642, and 668–688; these read IANDIAKYFAIIPPLFIGLFP, AILSAVIYNAFIIIFLIPLAL, and IIAPFIAIKGIDILITMLGIV.

This sequence belongs to the cation transport ATPase (P-type) (TC 3.A.3) family. Type IA subfamily. The system is composed of three essential subunits: KdpA, KdpB and KdpC.

It is found in the cell membrane. The catalysed reaction is K(+)(out) + ATP + H2O = K(+)(in) + ADP + phosphate + H(+). Functionally, part of the high-affinity ATP-driven potassium transport (or Kdp) system, which catalyzes the hydrolysis of ATP coupled with the electrogenic transport of potassium into the cytoplasm. This subunit is responsible for energy coupling to the transport system and for the release of the potassium ions to the cytoplasm. This Clostridium perfringens (strain ATCC 13124 / DSM 756 / JCM 1290 / NCIMB 6125 / NCTC 8237 / Type A) protein is Potassium-transporting ATPase ATP-binding subunit.